A 165-amino-acid chain; its full sequence is Cell division protein SepF (165 aa).

A disordered region spans residues 23–75 (DEYGDYAGDYETQETAPVATRSSKRESRPAPVSDLSERRRPASGPTGVVAELS).

Belongs to the SepF family. Homodimer. Interacts with FtsZ.

The protein resides in the cytoplasm. Functionally, cell division protein that is part of the divisome complex and is recruited early to the Z-ring. Probably stimulates Z-ring formation, perhaps through the cross-linking of FtsZ protofilaments. Its function overlaps with FtsA. This is Cell division protein SepF from Nocardioides sp. (strain ATCC BAA-499 / JS614).